A 379-amino-acid polypeptide reads, in one-letter code: Cobalt-precorrin-5B C(1)-methyltransferase (379 aa).

This sequence belongs to the CbiD family.

It carries out the reaction Co-precorrin-5B + S-adenosyl-L-methionine = Co-precorrin-6A + S-adenosyl-L-homocysteine. Its pathway is cofactor biosynthesis; adenosylcobalamin biosynthesis; cob(II)yrinate a,c-diamide from sirohydrochlorin (anaerobic route): step 6/10. In terms of biological role, catalyzes the methylation of C-1 in cobalt-precorrin-5B to form cobalt-precorrin-6A. The sequence is that of Cobalt-precorrin-5B C(1)-methyltransferase from Edwardsiella ictaluri (strain 93-146).